The sequence spans 360 residues: Peptide chain release factor 1 (360 aa).

N5-methylglutamine is present on Q237.

This sequence belongs to the prokaryotic/mitochondrial release factor family. Methylated by PrmC. Methylation increases the termination efficiency of RF1.

The protein resides in the cytoplasm. In terms of biological role, peptide chain release factor 1 directs the termination of translation in response to the peptide chain termination codons UAG and UAA. This chain is Peptide chain release factor 1, found in Nitrosococcus oceani (strain ATCC 19707 / BCRC 17464 / JCM 30415 / NCIMB 11848 / C-107).